Consider the following 249-residue polypeptide: Protein ZPS1 (249 aa).

Residues 1–20 (MKFSSGKSIIFATIASLALS) form the signal peptide. Residues asparagine 28, asparagine 57, asparagine 98, and asparagine 217 are each glycosylated (N-linked (GlcNAc...) asparagine).

The protein belongs to the ZPS1 family.

In Saccharomyces cerevisiae (strain ATCC 204508 / S288c) (Baker's yeast), this protein is Protein ZPS1 (ZPS1).